Here is a 230-residue protein sequence, read N- to C-terminus: Cytochrome b6-f complex iron-sulfur subunit, chloroplastic (230 aa).

Residues 1 to 50 constitute a chloroplast transit peptide; that stretch reads MSSTTLSPTTPSQLCSGKSGISCPSIALLVKPTRTQMTGRGNKGMKITCQ. The chain crosses the membrane as a helical span at residues 72–92; the sequence is LLGALSLPTAGMLVPYGSFLV. The Rieske domain occupies 115–213; that stretch reads ATEWLKTHAP…VGVEDGKVVF (99 aa). [2Fe-2S] cluster contacts are provided by C157, H159, C175, and H178. C162 and C177 are oxidised to a cystine.

It belongs to the Rieske iron-sulfur protein family. In terms of assembly, the 4 large subunits of the cytochrome b6-f complex are cytochrome b6, subunit IV (17 kDa polypeptide, petD), cytochrome f and the Rieske protein, while the 4 small subunits are petG, petL, petM and petN. The complex functions as a dimer. It depends on [2Fe-2S] cluster as a cofactor.

The protein resides in the plastid. It is found in the chloroplast thylakoid membrane. The catalysed reaction is 2 oxidized [plastocyanin] + a plastoquinol + 2 H(+)(in) = 2 reduced [plastocyanin] + a plastoquinone + 4 H(+)(out). In terms of biological role, component of the cytochrome b6-f complex, which mediates electron transfer between photosystem II (PSII) and photosystem I (PSI), cyclic electron flow around PSI, and state transitions. In Pisum sativum (Garden pea), this protein is Cytochrome b6-f complex iron-sulfur subunit, chloroplastic (petC).